Consider the following 274-residue polypeptide: Large ribosomal subunit protein uL2cz/uL2cy (274 aa).

A disordered region spans residues asparagine 224–alanine 252.

This sequence belongs to the universal ribosomal protein uL2 family. As to quaternary structure, part of the 50S ribosomal subunit.

It localises to the plastid. The protein resides in the chloroplast. The protein is Large ribosomal subunit protein uL2cz/uL2cy (rpl2-A) of Capsella bursa-pastoris (Shepherd's purse).